Reading from the N-terminus, the 389-residue chain is Probable tRNA sulfurtransferase (389 aa).

The THUMP domain maps to 57–165 (DEALDRLSKI…EDETYIYHRV (109 aa)). ATP is bound by residues 183–184 (LL), lysine 267, glycine 289, and glutamine 298.

This sequence belongs to the ThiI family.

The protein localises to the cytoplasm. It carries out the reaction [ThiI sulfur-carrier protein]-S-sulfanyl-L-cysteine + a uridine in tRNA + 2 reduced [2Fe-2S]-[ferredoxin] + ATP + H(+) = [ThiI sulfur-carrier protein]-L-cysteine + a 4-thiouridine in tRNA + 2 oxidized [2Fe-2S]-[ferredoxin] + AMP + diphosphate. It catalyses the reaction [ThiS sulfur-carrier protein]-C-terminal Gly-Gly-AMP + S-sulfanyl-L-cysteinyl-[cysteine desulfurase] + AH2 = [ThiS sulfur-carrier protein]-C-terminal-Gly-aminoethanethioate + L-cysteinyl-[cysteine desulfurase] + A + AMP + 2 H(+). The protein operates within cofactor biosynthesis; thiamine diphosphate biosynthesis. In terms of biological role, catalyzes the ATP-dependent transfer of a sulfur to tRNA to produce 4-thiouridine in position 8 of tRNAs, which functions as a near-UV photosensor. Also catalyzes the transfer of sulfur to the sulfur carrier protein ThiS, forming ThiS-thiocarboxylate. This is a step in the synthesis of thiazole, in the thiamine biosynthesis pathway. The sulfur is donated as persulfide by IscS. This Methanothermobacter thermautotrophicus (strain ATCC 29096 / DSM 1053 / JCM 10044 / NBRC 100330 / Delta H) (Methanobacterium thermoautotrophicum) protein is Probable tRNA sulfurtransferase.